We begin with the raw amino-acid sequence, 177 residues long: Large ribosomal subunit protein uL6 (177 aa).

Positions 154–177 (PEPYKGKGVRYADEQVRRKEAKKK) are disordered. The span at 155 to 171 (EPYKGKGVRYADEQVRR) shows a compositional bias: basic and acidic residues.

It belongs to the universal ribosomal protein uL6 family. In terms of assembly, part of the 50S ribosomal subunit.

In terms of biological role, this protein binds to the 23S rRNA, and is important in its secondary structure. It is located near the subunit interface in the base of the L7/L12 stalk, and near the tRNA binding site of the peptidyltransferase center. The polypeptide is Large ribosomal subunit protein uL6 (Alcanivorax borkumensis (strain ATCC 700651 / DSM 11573 / NCIMB 13689 / SK2)).